Here is a 558-residue protein sequence, read N- to C-terminus: Magnesium-chelatase 60 kDa subunit (558 aa).

2 disordered regions span residues 234-268 and 298-325; these read MPASEEAPPEPEPEPPEDQPDDSPPPPEQQQGEEM and MARGATGTGSAKAGNRRGRPLPSRMGRL. Positions 240–254 are enriched in acidic residues; sequence APPEPEPEPPEDQPD. Residues 298 to 308 show a composition bias toward low complexity; that stretch reads MARGATGTGSA. The region spanning 376 to 555 is the VWFA domain; the sequence is VLIFAVDASG…HKLSNVLGAA (180 aa).

Belongs to the Mg-chelatase subunits D/I family.

The catalysed reaction is protoporphyrin IX + Mg(2+) + ATP + H2O = Mg-protoporphyrin IX + ADP + phosphate + 3 H(+). The protein operates within porphyrin-containing compound metabolism; bacteriochlorophyll biosynthesis. In terms of biological role, involved in bacteriochlorophyll biosynthesis; introduces a magnesium ion into protoporphyrin IX to yield Mg-protoporphyrin IX. This is Magnesium-chelatase 60 kDa subunit (bchD) from Cereibacter sphaeroides (strain ATCC 17023 / DSM 158 / JCM 6121 / CCUG 31486 / LMG 2827 / NBRC 12203 / NCIMB 8253 / ATH 2.4.1.) (Rhodobacter sphaeroides).